The following is a 252-amino-acid chain: Phosphoglycolate phosphatase (252 aa).

Residue aspartate 13 is the Nucleophile of the active site. Mg(2+)-binding residues include aspartate 13, aspartate 15, and aspartate 192.

Belongs to the HAD-like hydrolase superfamily. CbbY/CbbZ/Gph/YieH family. As to quaternary structure, monomer. The cofactor is Mg(2+). Chloride serves as cofactor.

It carries out the reaction 2-phosphoglycolate + H2O = glycolate + phosphate. It participates in organic acid metabolism; glycolate biosynthesis; glycolate from 2-phosphoglycolate: step 1/1. Specifically catalyzes the dephosphorylation of 2-phosphoglycolate. Is involved in the dissimilation of the intracellular 2-phosphoglycolate formed during the DNA repair of 3'-phosphoglycolate ends, a major class of DNA lesions induced by oxidative stress. The chain is Phosphoglycolate phosphatase from Salmonella typhimurium (strain LT2 / SGSC1412 / ATCC 700720).